Reading from the N-terminus, the 396-residue chain is Phosphoglycerate kinase (396 aa).

Substrate is bound by residues 22 to 24 (DLN), arginine 37, 60 to 63 (HFGR), arginine 118, and arginine 151. ATP contacts are provided by residues lysine 201, glutamate 323, and 353-356 (GGDT).

It belongs to the phosphoglycerate kinase family. In terms of assembly, monomer.

Its subcellular location is the cytoplasm. It carries out the reaction (2R)-3-phosphoglycerate + ATP = (2R)-3-phospho-glyceroyl phosphate + ADP. Its pathway is carbohydrate degradation; glycolysis; pyruvate from D-glyceraldehyde 3-phosphate: step 2/5. The protein is Phosphoglycerate kinase of Azorhizobium caulinodans (strain ATCC 43989 / DSM 5975 / JCM 20966 / LMG 6465 / NBRC 14845 / NCIMB 13405 / ORS 571).